Reading from the N-terminus, the 71-residue chain is MGKFIGAGLATIGLGGAGIGVGHVAGNFLAGALRNPSAAPGQMANLFVGIAFAEALGIFSFLIALLLMFAV.

The next 2 helical transmembrane spans lie at 4 to 24 and 46 to 66; these read FIGA…VGHV and LFVG…IALL.

This sequence belongs to the ATPase C chain family. As to quaternary structure, F-type ATPases have 2 components, F(1) - the catalytic core - and F(0) - the membrane proton channel. F(1) has five subunits: alpha(3), beta(3), gamma(1), delta(1), epsilon(1). F(0) has four main subunits: a(1), b(1), b'(1) and c(10-14). The alpha and beta chains form an alternating ring which encloses part of the gamma chain. F(1) is attached to F(0) by a central stalk formed by the gamma and epsilon chains, while a peripheral stalk is formed by the delta, b and b' chains.

It localises to the cell inner membrane. In terms of biological role, f(1)F(0) ATP synthase produces ATP from ADP in the presence of a proton or sodium gradient. F-type ATPases consist of two structural domains, F(1) containing the extramembraneous catalytic core and F(0) containing the membrane proton channel, linked together by a central stalk and a peripheral stalk. During catalysis, ATP synthesis in the catalytic domain of F(1) is coupled via a rotary mechanism of the central stalk subunits to proton translocation. Key component of the F(0) channel; it plays a direct role in translocation across the membrane. A homomeric c-ring of between 10-14 subunits forms the central stalk rotor element with the F(1) delta and epsilon subunits. This chain is ATP synthase subunit c 1, found in Cereibacter sphaeroides (strain ATCC 17029 / ATH 2.4.9) (Rhodobacter sphaeroides).